The chain runs to 164 residues: V-type proton ATPase subunit c' (164 aa).

Topologically, residues 1 to 14 are vacuolar; the sequence is MSTQLASNIYAPLY. A helical transmembrane segment spans residues 15–37; that stretch reads APFFGFAGCAAAMVLSCLGAAIG. Over 38–59 the chain is Cytoplasmic; that stretch reads TAKSGIGIAGIGTFKPELIMKS. Residues 60 to 80 form a helical membrane-spanning segment; the sequence is LIPVVMSGILAIYGLVVAVLI. At 81 to 98 the chain is on the vacuolar side; it reads AGNLSPTEDYTLFNGFMH. Residues 99 to 120 form a helical membrane-spanning segment; the sequence is LSCGLCVGFACLSSGYAIGMVG. Residues 121 to 132 lie on the Cytoplasmic side of the membrane; that stretch reads DVGVRKYMHQPR. Residues 133–158 form a helical membrane-spanning segment; it reads LFVGIVLILIFSEVLGLYGMIVALIL. At 159 to 164 the chain is on the vacuolar side; the sequence is NTRGSE.

Belongs to the V-ATPase proteolipid subunit family. In terms of assembly, V-ATPase is a heteromultimeric enzyme composed of a peripheral catalytic V1 complex (components A to H) attached to an integral membrane V0 proton pore complex (components: a, c, c', c'', d, e, f and VOA1). The decameric c-ring forms the proton-conducting pore, and is composed of eight proteolipid subunits c, one subunit c' and one subunit c''.

Its subcellular location is the vacuole membrane. Its function is as follows. Proton-conducting pore forming subunit of the V0 complex of vacuolar(H+)-ATPase (V-ATPase), a multisubunit enzyme composed of a peripheral complex (V1) that hydrolyzes ATP and a membrane integral complex (V0) that translocates protons. V-ATPase is responsible for acidifying and maintaining the pH of intracellular compartments. This chain is V-type proton ATPase subunit c' (VMA11), found in Saccharomyces cerevisiae (strain ATCC 204508 / S288c) (Baker's yeast).